The primary structure comprises 252 residues: Probable phosphatase Shewana3_2794 (252 aa).

Zn(2+) is bound by residues His-8, His-10, His-16, His-41, Glu-74, His-102, His-132, Asp-193, and His-195.

Belongs to the PHP family. Requires Zn(2+) as cofactor.

This Shewanella sp. (strain ANA-3) protein is Probable phosphatase Shewana3_2794.